The following is a 447-amino-acid chain: Probable glycine dehydrogenase (decarboxylating) subunit 1 (447 aa).

Belongs to the GcvP family. N-terminal subunit subfamily. As to quaternary structure, the glycine cleavage system is composed of four proteins: P, T, L and H. In this organism, the P 'protein' is a heterodimer of two subunits.

The enzyme catalyses N(6)-[(R)-lipoyl]-L-lysyl-[glycine-cleavage complex H protein] + glycine + H(+) = N(6)-[(R)-S(8)-aminomethyldihydrolipoyl]-L-lysyl-[glycine-cleavage complex H protein] + CO2. Functionally, the glycine cleavage system catalyzes the degradation of glycine. The P protein binds the alpha-amino group of glycine through its pyridoxal phosphate cofactor; CO(2) is released and the remaining methylamine moiety is then transferred to the lipoamide cofactor of the H protein. The sequence is that of Probable glycine dehydrogenase (decarboxylating) subunit 1 from Bacillus cereus (strain AH187).